We begin with the raw amino-acid sequence, 412 residues long: Palmitoyltransferase ZDHHC6 (412 aa).

Over 1–24 (MNILSAIIVFENLHEVKRLFHWGP) the chain is Cytoplasmic. Residues 25–45 (IIALTVIGVCSSMAILDSIIW) form a helical membrane-spanning segment. The Lumenal portion of the chain corresponds to 46 to 57 (YWPLDTTGGSIN). Residues 58 to 78 (FIMLINWTVLILYNYFNAMFV) traverse the membrane as a helical segment. The Cytoplasmic segment spans residues 79 to 143 (GPGYIPLEWK…NCCGHLNHAY (65 aa)). The 51-residue stretch at 99–149 (QFCRLCQGYKAPRSHHCRKCNRCVMKMDHHCPWINNCCGHLNHAYFTSFLL) folds into the DHHC domain. Cys-129 serves as the catalytic S-palmitoyl cysteine intermediate. A helical membrane pass occupies residues 144 to 164 (FTSFLLLAPLGCIHAALIFIM). Residues 165–205 (TMYTQLYDRISFGWSSVKIDMSAARHIHHPIMPFSIAAFAA) are Lumenal-facing. Residues 206-226 (TLFALGLALGTTIAVGMLFFI) traverse the membrane as a helical segment. The Cytoplasmic portion of the chain corresponds to 227–412 (QMKVILRNRT…NSTSEEKKEQ (186 aa)). The SH3 domain maps to 313-398 (QRSVEYRVVE…PRRCVEKCLY (86 aa)). S-palmitoyl cysteine attachment occurs at residues Cys-328, Cys-329, and Cys-343. Residues 409–412 (KKEQ) carry the Di-lysine motif motif.

The protein belongs to the DHHC palmitoyltransferase family.

The protein resides in the endoplasmic reticulum membrane. It carries out the reaction L-cysteinyl-[protein] + hexadecanoyl-CoA = S-hexadecanoyl-L-cysteinyl-[protein] + CoA. It catalyses the reaction L-cysteinyl-[protein] + octadecanoyl-CoA = S-octadecanoyl-L-cysteinyl-[protein] + CoA. In terms of biological role, endoplasmic reticulum palmitoyl acyltransferase that probably catalyzes the addition of palmitate onto various protein substrates and is involved in a variety of cellular processes. Could also function as a stearoyltransferase. This chain is Palmitoyltransferase ZDHHC6, found in Danio rerio (Zebrafish).